The primary structure comprises 440 residues: uncharacterized protein (440 aa).

This is an uncharacterized protein from Rickettsia conorii (strain ATCC VR-613 / Malish 7).